A 1649-amino-acid polypeptide reads, in one-letter code: eIF-2-alpha kinase GCN2 (1649 aa).

The segment at 1-26 (MAGGRGAAGRGPAEPQESYSQRQDHE) is disordered. Residues 25 to 137 (HELQALEAIY…HHVQSFLSEH (113 aa)) enclose the RWD domain. Residues 146 to 205 (HEEMLERQAQEKQQRLLEARQKEEQEQREILHEIQKRKEEIKEEKKRKEMAKQERLEITS) adopt a coiled-coil conformation. The interval 227-260 (HGGSPDFVGNGKARAHSSGRSRRERQYSVCSGEA) is disordered. Residue S230 is modified to Phosphoserine. Residues 239–249 (ARAHSSGRSRR) are compositionally biased toward basic residues. Protein kinase domains are found at residues 296–539 (VYNA…HSFI) and 590–1001 (FEEL…SELL). ATP is bound by residues 596–604 (LGKGAFGAV) and K619. Residues 662 to 785 (PAVPGTPPPD…CNEKDSRHEI (124 aa)) are disordered. T667 bears the Phosphothreonine mark. Residues 705–721 (LSSSVEWSTSAERSNSA) are compositionally biased toward polar residues. Composition is skewed to acidic residues over residues 731 to 740 (SSDEEDEDER) and 754 to 764 (SDSDIIFDNED). Catalysis depends on D847, which acts as the Proton acceptor. A Phosphothreonine modification is found at T870. T899 and T904 each carry phosphothreonine; by autocatalysis. Residues 1022 to 1493 (TDGKAYRTMM…DHVMQKLRTK (472 aa)) are histidyl-tRNA synthetase-like. K1259 bears the N6-acetyllysine mark.

This sequence belongs to the protein kinase superfamily. Ser/Thr protein kinase family. GCN2 subfamily. As to quaternary structure, homodimer; homodimerization is important for kinase activation by uncharged tRNAs. Interacts with GCN1; this interaction stimulates EIF2AK4/GCN2 kinase activity and is impaired by IMPACT upon a variety of stress conditions, such as amino acid depletion, UV-C irradiation, proteasome inhibitor treatment and glucose deprivation. Interacts with DNAJC3; this interaction inhibits EIF2AK4/GCN2 kinase activity during endoplasmic reticulum (ER), hypothermic and amino acid-starving stress conditions. Interacts with MAP3K20; activates EIF2AK4/GCN2 kinase activity in response to moderate ribotoxic stress. In terms of processing, autophosphorylated; autophosphorylation on Thr-899 is increased upon amino acid starvation and in UV irradiation cells and inhibited in presence of IMPACT.

The protein resides in the cytoplasm. The catalysed reaction is L-seryl-[protein] + ATP = O-phospho-L-seryl-[protein] + ADP + H(+). It carries out the reaction L-threonyl-[protein] + ATP = O-phospho-L-threonyl-[protein] + ADP + H(+). Metabolic-stress sensing protein kinase that phosphorylates the alpha subunit of eukaryotic translation initiation factor 2 (EIF2S1/eIF-2-alpha) in response to low amino acid availability. Plays a role as an activator of the integrated stress response (ISR) required for adaptation to amino acid starvation. EIF2S1/eIF-2-alpha phosphorylation in response to stress converts EIF2S1/eIF-2-alpha into a global protein synthesis inhibitor, leading to a global attenuation of cap-dependent translation, and thus to a reduced overall utilization of amino acids, while concomitantly initiating the preferential translation of ISR-specific mRNAs, such as the transcriptional activator ATF4, and hence allowing ATF4-mediated reprogramming of amino acid biosynthetic gene expression to alleviate nutrient depletion. Required for the translational induction of protein kinase PRKCH following amino acid starvation. Binds uncharged tRNAs. Involved in cell cycle arrest by promoting cyclin D1 mRNA translation repression after the unfolded protein response pathway (UPR) activation or cell cycle inhibitor CDKN1A/p21 mRNA translation activation in response to amino acid deprivation. Plays a role in the consolidation of synaptic plasticity, learning as well as formation of long-term memory. Plays a role in neurite outgrowth inhibition. Plays a role in feeding behavior to maintain amino acid homeostasis; contributes to the innate aversion toward diets of imbalanced amino acid composition. Plays a proapoptotic role in response to glucose deprivation. Promotes global cellular protein synthesis repression in response to UV irradiation independently of the stress-activated protein kinase/c-Jun N-terminal kinase (SAPK/JNK) and p38 MAPK signaling pathways. Plays a role in the antiviral response against alphavirus infection; impairs early viral mRNA translation of the incoming genomic virus RNA, thus preventing alphavirus replication. The polypeptide is eIF-2-alpha kinase GCN2 (Rattus norvegicus (Rat)).